The chain runs to 120 residues: NAD(P)H-quinone oxidoreductase subunit 3, chloroplastic (120 aa).

3 helical membrane-spanning segments follow: residues 9-29 (IFWAFLLISSVIPILAFLISG), 64-84 (MFALVFVVFDVETVFLYPWAM), and 88-108 (VLGVSVFLEALIFVLILIVGS).

The protein belongs to the complex I subunit 3 family. As to quaternary structure, NDH is composed of at least 16 different subunits, 5 of which are encoded in the nucleus.

The protein localises to the plastid. Its subcellular location is the chloroplast thylakoid membrane. The catalysed reaction is a plastoquinone + NADH + (n+1) H(+)(in) = a plastoquinol + NAD(+) + n H(+)(out). It catalyses the reaction a plastoquinone + NADPH + (n+1) H(+)(in) = a plastoquinol + NADP(+) + n H(+)(out). In terms of biological role, NDH shuttles electrons from NAD(P)H:plastoquinone, via FMN and iron-sulfur (Fe-S) centers, to quinones in the photosynthetic chain and possibly in a chloroplast respiratory chain. The immediate electron acceptor for the enzyme in this species is believed to be plastoquinone. Couples the redox reaction to proton translocation, and thus conserves the redox energy in a proton gradient. This chain is NAD(P)H-quinone oxidoreductase subunit 3, chloroplastic, found in Acorus calamus var. americanus (American sweet flag).